Here is a 353-residue protein sequence, read N- to C-terminus: Photosystem II protein D1 (353 aa).

The residue at position 2 (T2) is an N-acetylthreonine. T2 is modified (phosphothreonine). The next 3 membrane-spanning stretches (helical) occupy residues 29–46 (YIGW…TATS), 118–133 (HFFL…EWEL), and 142–156 (WIAV…AATA). H118 provides a ligand contact to chlorophyll a. Y126 serves as a coordination point for pheophytin a. The [CaMn4O5] cluster site is built by D170 and E189. The helical transmembrane segment at 197–218 (FHMLGVAGVFGGSLFSAMHGSL) threads the bilayer. Residue H198 coordinates chlorophyll a. Residues H215 and 264–265 (SF) contribute to the a quinone site. Residue H215 coordinates Fe cation. Fe cation is bound at residue H272. A helical membrane pass occupies residues 274-288 (FLAAWPVVGIWFTAL). [CaMn4O5] cluster-binding residues include H332, E333, D342, and A344. A propeptide spanning residues 345-353 (SVEAPSVNA) is cleaved from the precursor.

The protein belongs to the reaction center PufL/M/PsbA/D family. PSII is composed of 1 copy each of membrane proteins PsbA, PsbB, PsbC, PsbD, PsbE, PsbF, PsbH, PsbI, PsbJ, PsbK, PsbL, PsbM, PsbT, PsbX, PsbY, PsbZ, Psb30/Ycf12, at least 3 peripheral proteins of the oxygen-evolving complex and a large number of cofactors. It forms dimeric complexes. The D1/D2 heterodimer binds P680, chlorophylls that are the primary electron donor of PSII, and subsequent electron acceptors. It shares a non-heme iron and each subunit binds pheophytin, quinone, additional chlorophylls, carotenoids and lipids. D1 provides most of the ligands for the Mn4-Ca-O5 cluster of the oxygen-evolving complex (OEC). There is also a Cl(-1) ion associated with D1 and D2, which is required for oxygen evolution. The PSII complex binds additional chlorophylls, carotenoids and specific lipids. serves as cofactor. In terms of processing, the 9 C-terminal residues are removed, probably by CTPA (AC O04073); processing is essential to allow assembly of the oxygen-evolving complex and thus photosynthetic growth. Tyr-161 forms a radical intermediate that is referred to as redox-active TyrZ, YZ or Y-Z.

It is found in the plastid. Its subcellular location is the chloroplast thylakoid membrane. It catalyses the reaction 2 a plastoquinone + 4 hnu + 2 H2O = 2 a plastoquinol + O2. In terms of biological role, photosystem II (PSII) is a light-driven water:plastoquinone oxidoreductase that uses light energy to abstract electrons from H(2)O, generating O(2) and a proton gradient subsequently used for ATP formation. It consists of a core antenna complex that captures photons, and an electron transfer chain that converts photonic excitation into a charge separation. The D1/D2 (PsbA/PsbD) reaction center heterodimer binds P680, the primary electron donor of PSII as well as several subsequent electron acceptors. The sequence is that of Photosystem II protein D1 from Tetradesmus obliquus (Green alga).